The primary structure comprises 989 residues: Translation initiation factor IF-2 (989 aa).

2 disordered regions span residues 28 to 60 (GVTK…TDAD) and 97 to 397 (VRRD…DQNT). Composition is skewed to basic and acidic residues over residues 40 to 60 (ETDK…TDAD) and 122 to 178 (ELQR…EAAK). A compositionally biased stretch (low complexity) spans 182 to 223 (AAAAEAAAREQQTQASKPAQAAQPAAAKAEPVAAKAAEPVVA). The span at 231-280 (ERAAAERAAQREAAKKAEDAARQAAEKARAEQEEIAKRRAAAEAEARAIR) shows a compositional bias: basic and acidic residues. The span at 318 to 345 (RPAGEAPARPAAKKPAAAAPAATTTPSA) shows a compositional bias: low complexity. The segment covering 374-387 (TSGGVDRGWRGGPK) has biased composition (gly residues). One can recognise a tr-type G domain in the interval 489–658 (PRPPVVTVMG…LLQAEVLELK (170 aa)). The tract at residues 498 to 505 (GHVDHGKT) is G1. 498-505 (GHVDHGKT) serves as a coordination point for GTP. Positions 523–527 (GITQH) are G2. The tract at residues 544-547 (DTPG) is G3. GTP is bound by residues 544–548 (DTPGH) and 598–601 (NKID). The tract at residues 598–601 (NKID) is G4. Residues 634 to 636 (SAK) are G5.

It belongs to the TRAFAC class translation factor GTPase superfamily. Classic translation factor GTPase family. IF-2 subfamily.

It localises to the cytoplasm. One of the essential components for the initiation of protein synthesis. Protects formylmethionyl-tRNA from spontaneous hydrolysis and promotes its binding to the 30S ribosomal subunits. Also involved in the hydrolysis of GTP during the formation of the 70S ribosomal complex. The polypeptide is Translation initiation factor IF-2 (Paraburkholderia xenovorans (strain LB400)).